Reading from the N-terminus, the 320-residue chain is Ferrochelatase (320 aa).

Fe cation is bound by residues histidine 194 and glutamate 272.

The protein belongs to the ferrochelatase family.

Its subcellular location is the cytoplasm. The catalysed reaction is heme b + 2 H(+) = protoporphyrin IX + Fe(2+). It participates in porphyrin-containing compound metabolism; protoheme biosynthesis; protoheme from protoporphyrin-IX: step 1/1. Functionally, catalyzes the ferrous insertion into protoporphyrin IX. The chain is Ferrochelatase from Desulfotalea psychrophila (strain LSv54 / DSM 12343).